The primary structure comprises 242 residues: Ribose-5-phosphate isomerase A (242 aa).

Residues 39-42 (SGST), 95-98 (DGAD), and 108-111 (KGGG) each bind substrate. Residue Glu-117 is the Proton acceptor of the active site. Position 135 (Lys-135) interacts with substrate.

Belongs to the ribose 5-phosphate isomerase family. In terms of assembly, homodimer.

The enzyme catalyses aldehydo-D-ribose 5-phosphate = D-ribulose 5-phosphate. It participates in carbohydrate degradation; pentose phosphate pathway; D-ribose 5-phosphate from D-ribulose 5-phosphate (non-oxidative stage): step 1/1. Catalyzes the reversible conversion of ribose-5-phosphate to ribulose 5-phosphate. The chain is Ribose-5-phosphate isomerase A from Chlamydia trachomatis serovar L2 (strain ATCC VR-902B / DSM 19102 / 434/Bu).